The following is a 508-amino-acid chain: Maturase K (508 aa).

The protein belongs to the intron maturase 2 family. MatK subfamily.

The protein localises to the plastid. It is found in the chloroplast. In terms of biological role, usually encoded in the trnK tRNA gene intron. Probably assists in splicing its own and other chloroplast group II introns. The chain is Maturase K from Manilkara zapota (Sapodilla plum).